Reading from the N-terminus, the 491-residue chain is Bifunctional protein GlmU (491 aa).

Residues 1–238 (MTTQPAVPAA…EWEIRGVNDR (238 aa)) are pyrophosphorylase. Residues 14-17 (LAAG), Lys-28, Gln-81, 86-87 (GT), 110-112 (YGD), Gly-149, Glu-163, Asn-178, and Asn-236 contribute to the UDP-N-acetyl-alpha-D-glucosamine site. A Mg(2+)-binding site is contributed by Asp-112. Asn-236 provides a ligand contact to Mg(2+). A linker region spans residues 239–259 (AQLADLAAEANRRTLRRWMLA). Positions 260–491 (GVTIADPATT…TASTDREIQP (232 aa)) are N-acetyltransferase. UDP-N-acetyl-alpha-D-glucosamine-binding residues include Arg-341 and Lys-359. His-371 serves as the catalytic Proton acceptor. 2 residues coordinate UDP-N-acetyl-alpha-D-glucosamine: Tyr-374 and Asn-385. Acetyl-CoA is bound by residues Ala-388, 394 to 395 (NY), Ser-413, and Ala-431. The interval 460-491 (AKRPGTPAAEAAQRANDESTGTTASTDREIQP) is disordered.

It in the N-terminal section; belongs to the N-acetylglucosamine-1-phosphate uridyltransferase family. The protein in the C-terminal section; belongs to the transferase hexapeptide repeat family. Homotrimer. Mg(2+) is required as a cofactor.

The protein localises to the cytoplasm. The enzyme catalyses alpha-D-glucosamine 1-phosphate + acetyl-CoA = N-acetyl-alpha-D-glucosamine 1-phosphate + CoA + H(+). The catalysed reaction is N-acetyl-alpha-D-glucosamine 1-phosphate + UTP + H(+) = UDP-N-acetyl-alpha-D-glucosamine + diphosphate. The protein operates within nucleotide-sugar biosynthesis; UDP-N-acetyl-alpha-D-glucosamine biosynthesis; N-acetyl-alpha-D-glucosamine 1-phosphate from alpha-D-glucosamine 6-phosphate (route II): step 2/2. Its pathway is nucleotide-sugar biosynthesis; UDP-N-acetyl-alpha-D-glucosamine biosynthesis; UDP-N-acetyl-alpha-D-glucosamine from N-acetyl-alpha-D-glucosamine 1-phosphate: step 1/1. It participates in bacterial outer membrane biogenesis; LPS lipid A biosynthesis. Its function is as follows. Catalyzes the last two sequential reactions in the de novo biosynthetic pathway for UDP-N-acetylglucosamine (UDP-GlcNAc). The C-terminal domain catalyzes the transfer of acetyl group from acetyl coenzyme A to glucosamine-1-phosphate (GlcN-1-P) to produce N-acetylglucosamine-1-phosphate (GlcNAc-1-P), which is converted into UDP-GlcNAc by the transfer of uridine 5-monophosphate (from uridine 5-triphosphate), a reaction catalyzed by the N-terminal domain. The protein is Bifunctional protein GlmU of Kineococcus radiotolerans (strain ATCC BAA-149 / DSM 14245 / SRS30216).